The primary structure comprises 181 residues: Inner membrane-spanning protein YciB (181 aa).

Transmembrane regions (helical) follow at residues 10–30 (LIIFFAVYKFFDIYIASGALI), 50–70 (MHLITFAMVTVFGTLTLVFHD), 72–92 (AFIKWKVTIIYALFALALGVS), 118–138 (VTWYWVSFFAICGLVNIYVAF), and 148–168 (FKVFGLTALTLINTVITVFYL).

This sequence belongs to the YciB family.

The protein localises to the cell inner membrane. Functionally, plays a role in cell envelope biogenesis, maintenance of cell envelope integrity and membrane homeostasis. The chain is Inner membrane-spanning protein YciB from Shewanella sp. (strain MR-7).